The chain runs to 216 residues: Uracil phosphoribosyltransferase (216 aa).

30–34 serves as a coordination point for GTP; it reads KNLVR. Residues Arg80, Arg105, and 140–148 each bind 5-phospho-alpha-D-ribose 1-diphosphate; that span reads DPMIATAST. Uracil contacts are provided by residues Ile203 and 208–210; that span reads GDA. 5-phospho-alpha-D-ribose 1-diphosphate is bound at residue Asp209.

It belongs to the UPRTase family. Requires Mg(2+) as cofactor.

It carries out the reaction UMP + diphosphate = 5-phospho-alpha-D-ribose 1-diphosphate + uracil. It functions in the pathway pyrimidine metabolism; UMP biosynthesis via salvage pathway; UMP from uracil: step 1/1. With respect to regulation, allosterically activated by GTP. Catalyzes the conversion of uracil and 5-phospho-alpha-D-ribose 1-diphosphate (PRPP) to UMP and diphosphate. The chain is Uracil phosphoribosyltransferase from Saccharolobus islandicus (strain M.16.4 / Kamchatka #3) (Sulfolobus islandicus).